A 543-amino-acid chain; its full sequence is Chaperonin GroEL 2 (543 aa).

Residues 29-32 (TLGP), 86-90 (DGTTT), glycine 413, 479-481 (NAA), and aspartate 495 each bind ATP.

This sequence belongs to the chaperonin (HSP60) family. Forms a cylinder of 14 subunits composed of two heptameric rings stacked back-to-back. Interacts with the co-chaperonin GroES.

Its subcellular location is the cytoplasm. It catalyses the reaction ATP + H2O + a folded polypeptide = ADP + phosphate + an unfolded polypeptide.. Functionally, together with its co-chaperonin GroES, plays an essential role in assisting protein folding. The GroEL-GroES system forms a nano-cage that allows encapsulation of the non-native substrate proteins and provides a physical environment optimized to promote and accelerate protein folding. In Synechococcus sp. (strain CC9311), this protein is Chaperonin GroEL 2.